The chain runs to 447 residues: Delta(5) fatty acid desaturase fat-4 (447 aa).

A Cytochrome b5 heme-binding domain is found at 1-80; it reads MVLREQEHEP…TQEPEIPDIK (80 aa). 4 consecutive transmembrane segments (helical) span residues 137 to 157, 257 to 277, 292 to 312, and 319 to 339; these read IFTILFAFYLQYHTYYLPSAI, WTFMLPFLRLSWLLQSIIFVS, IYEQVGLSLHWAWSLGQLYFL, and IMFFLVSHLVGGFLLSHVVTF.

This sequence belongs to the fatty acid desaturase type 1 family.

Its subcellular location is the membrane. It carries out the reaction (11Z,14Z)-eicosadienoyl-CoA + 2 Fe(II)-[cytochrome b5] + O2 + 2 H(+) = (5Z,11Z,14Z)-eicosatrienoyl-CoA + 2 Fe(III)-[cytochrome b5] + 2 H2O. It catalyses the reaction (11Z,14Z,17Z)-eicosatrienoyl-CoA + 2 Fe(II)-[cytochrome b5] + O2 + 2 H(+) = (5Z,11Z,14Z,17Z)-eicosatetraenoyl-CoA + 2 Fe(III)-[cytochrome b5] + 2 H2O. The catalysed reaction is (8Z,11Z,14Z,17Z)-eicosatetraenoyl-CoA + 2 Fe(II)-[cytochrome b5] + O2 + 2 H(+) = (5Z,8Z,11Z,14Z,17Z)-eicosapentaenoyl-CoA + 2 Fe(III)-[cytochrome b5] + 2 H2O. The enzyme catalyses (8Z,11Z,14Z)-eicosatrienoyl-CoA + 2 Fe(II)-[cytochrome b5] + O2 + 2 H(+) = (5Z,8Z,11Z,14Z)-eicosatetraenoyl-CoA + 2 Fe(III)-[cytochrome b5] + 2 H2O. It participates in lipid metabolism; polyunsaturated fatty acid biosynthesis. Functionally, can function as a Delta(5) fatty acid desaturase and behaves as a (8-3) desaturase. Introduces a double bond in the fatty acid chain 5 carbons away from carboxy terminal to biosynthesize polyunsaturated fatty acids (PUFAs) endogenously (PUFAs are essential for membrane structure and many cellular and physiological processes). Acts on a variety of substrates such as dihomo-gamma-linoleoyl-CoA ((8Z,11Z,14Z)-eicosatrienoyl-CoA, 20:3n-6) to generate arachidonoyl-CoA ((5Z,8Z,11Z,14Z)-eicosatetraenoyl-CoA, 20:4n-6). Also acts on a number of other substrates, including fatty acids that do not contain a double bond at the 8 position like (11Z,14Z,17Z)-eicosatrienoyl-CoA (20:3n-3) to produce (5Z,11Z,14Z,17Z)-eicosatetraenoyl-CoA (20:4n-3). Unlike plants, Caenorhabditis elegans desaturases seem to use fatty acyl-CoAs as substrates. The polypeptide is Delta(5) fatty acid desaturase fat-4 (fat-4) (Caenorhabditis elegans).